Reading from the N-terminus, the 616-residue chain is Large ribosomal subunit assembly factor BipA (616 aa).

The 197-residue stretch at 8–204 (KKLRNIAIIA…AIVKHVEPPK (197 aa)) folds into the tr-type G domain. GTP is bound by residues 20–25 (DHGKTT) and 134–137 (NKVD).

The protein belongs to the TRAFAC class translation factor GTPase superfamily. Classic translation factor GTPase family. BipA subfamily. As to quaternary structure, monomer.

Its subcellular location is the cytoplasm. It catalyses the reaction GTP + H2O = GDP + phosphate + H(+). In terms of biological role, a 50S ribosomal subunit assembly protein with GTPase activity, required for 50S subunit assembly at low temperatures, may also play a role in translation. Binds GTP and analogs. Binds the 70S ribosome between the 30S and 50S subunits, in a similar position as ribosome-bound EF-G; it contacts a number of ribosomal proteins, both rRNAs and the A-site tRNA. This chain is Large ribosomal subunit assembly factor BipA, found in Haemophilus influenzae (strain ATCC 51907 / DSM 11121 / KW20 / Rd).